A 320-amino-acid chain; its full sequence is MDFLANLCCVNKLTLLEEFILSKEGTSFVLPFPEEWRVTFHSLETIPEISKEDIEEIRNTYLCCEKTLIVVGVLHHVKKSTCRGPILLQGDRGHLYVYNGFFDKSLYYVSSNLQDFFLVGLKFFYPIYELCDFIVDFETGSKIVEHSKSFSDMIIYRDENINVCFILKSSPYKTYTRFCRLPMTPYTDQDLHRWKRVIRCNIVDVLFCVKHNVFGKWFELVIIFDVNGKIFGVDDEQIIFLAHNITEFLKIGCLRFNENRRLHGYWFERTNDVRNVEEELSRQINCPWGNTCKRKKRNIFKQPLLWKSVGRKNNSAHNVL.

Belongs to the herpesviridae US22 family.

This is Protein U25 (U25) from Human herpesvirus 7 (strain JI) (HHV-7).